A 287-amino-acid chain; its full sequence is Arylamine N-acetyltransferase, liver isozyme (287 aa).

Cys68 functions as the Acyl-thioester intermediate in the catalytic mechanism. Catalysis depends on residues His107 and Asp122.

This sequence belongs to the arylamine N-acetyltransferase family.

It catalyses the reaction an arylamine + acetyl-CoA = an N-acetylarylamine + CoA. The protein is Arylamine N-acetyltransferase, liver isozyme of Gallus gallus (Chicken).